The chain runs to 257 residues: Global transcriptional regulator CodY (257 aa).

The GAF domain stretch occupies residues 1–155 (MSLLSKTREL…AATVLGMEIL (155 aa)). Residues 203–222 (ASKVADRVGITRSVIVNALR) constitute a DNA-binding region (H-T-H motif).

This sequence belongs to the CodY family.

It localises to the cytoplasm. Its function is as follows. DNA-binding global transcriptional regulator which is involved in the adaptive response to starvation and acts by directly or indirectly controlling the expression of numerous genes in response to nutrient availability. During rapid exponential growth, CodY is highly active and represses genes whose products allow adaptation to nutrient depletion. The protein is Global transcriptional regulator CodY of Staphylococcus carnosus (strain TM300).